The primary structure comprises 435 residues: Serine carboxypeptidase-like 16 (435 aa).

An N-terminal signal peptide occupies residues 1–23; sequence MGSWIPKLLLLQLVLLLTKHADS. Disulfide bonds link C82-C325, C246-C260, and C284-C291. N-linked (GlcNAc...) asparagine glycosylation occurs at N103. S178 is an active-site residue. N305 carries N-linked (GlcNAc...) asparagine glycosylation. The active site involves D360. N376 is a glycosylation site (N-linked (GlcNAc...) asparagine). Residue H413 is part of the active site.

The protein belongs to the peptidase S10 family. In terms of tissue distribution, expressed in seedlings, roots and leaves.

It localises to the secreted. Its function is as follows. Probable carboxypeptidase. The chain is Serine carboxypeptidase-like 16 (SCPL16) from Arabidopsis thaliana (Mouse-ear cress).